Reading from the N-terminus, the 237-residue chain is UPF0053 protein HI_0056 (237 aa).

A run of 7 helical transmembrane segments spans residues 12–32 (ISLV…IIFI), 49–69 (ILGL…LAWI), 90–110 (ILLI…KEAI), 126–146 (YLGV…DSVI), 151–171 (MASH…VMMF), 188–208 (ILAL…SLDI), and 210–230 (IPKG…MINI).

The protein belongs to the UPF0053 family.

The protein localises to the cell membrane. This Haemophilus influenzae (strain ATCC 51907 / DSM 11121 / KW20 / Rd) protein is UPF0053 protein HI_0056.